The sequence spans 236 residues: MAATLLDVCAVVPAAGFGRRMQTECPKQYLSIGNKTILEHSVHALLAHPRVTRVVIAISPGDHRFAQLPLADHPQITVVDGGNERADSVLAGLQAVAEAQWVLVHDAARPCLHQDDLARLLAISENSRVGGILASPVRDTMKRGEPGKNAIAHTVERADLWHALTPQFFPRELLHDCLTRALNEGATITDEASALEYCGFHPALVEGRADNIKVTRPEDLALAEFYLTRTIHQEKA.

The protein belongs to the IspD/TarI cytidylyltransferase family. IspD subfamily. In terms of assembly, homodimer.

It catalyses the reaction 2-C-methyl-D-erythritol 4-phosphate + CTP + H(+) = 4-CDP-2-C-methyl-D-erythritol + diphosphate. It participates in isoprenoid biosynthesis; isopentenyl diphosphate biosynthesis via DXP pathway; isopentenyl diphosphate from 1-deoxy-D-xylulose 5-phosphate: step 2/6. Its function is as follows. Catalyzes the formation of 4-diphosphocytidyl-2-C-methyl-D-erythritol from CTP and 2-C-methyl-D-erythritol 4-phosphate (MEP). This is 2-C-methyl-D-erythritol 4-phosphate cytidylyltransferase from Salmonella newport (strain SL254).